A 139-amino-acid polypeptide reads, in one-letter code: Translation initiation factor 2 subunit beta (139 aa).

This sequence belongs to the eIF-2-beta/eIF-5 family. In terms of assembly, heterotrimer composed of an alpha, a beta and a gamma chain.

Its function is as follows. eIF-2 functions in the early steps of protein synthesis by forming a ternary complex with GTP and initiator tRNA. This chain is Translation initiation factor 2 subunit beta, found in Methanococcus aeolicus (strain ATCC BAA-1280 / DSM 17508 / OCM 812 / Nankai-3).